A 342-amino-acid chain; its full sequence is Anthranilate phosphoribosyltransferase (342 aa).

Residues Gly79, 82–83, Thr87, 89–92, 107–115, and Ser119 each bind 5-phospho-alpha-D-ribose 1-diphosphate; these read GD, NVST, and KHGNRSVSS. Position 79 (Gly79) interacts with anthranilate. Ser91 lines the Mg(2+) pocket. Position 110 (Asn110) interacts with anthranilate. Residue Arg165 participates in anthranilate binding. The Mg(2+) site is built by Asp223 and Glu224.

This sequence belongs to the anthranilate phosphoribosyltransferase family. As to quaternary structure, homodimer. It depends on Mg(2+) as a cofactor.

It catalyses the reaction N-(5-phospho-beta-D-ribosyl)anthranilate + diphosphate = 5-phospho-alpha-D-ribose 1-diphosphate + anthranilate. Its pathway is amino-acid biosynthesis; L-tryptophan biosynthesis; L-tryptophan from chorismate: step 2/5. Its function is as follows. Catalyzes the transfer of the phosphoribosyl group of 5-phosphorylribose-1-pyrophosphate (PRPP) to anthranilate to yield N-(5'-phosphoribosyl)-anthranilate (PRA). This is Anthranilate phosphoribosyltransferase from Aeromonas hydrophila subsp. hydrophila (strain ATCC 7966 / DSM 30187 / BCRC 13018 / CCUG 14551 / JCM 1027 / KCTC 2358 / NCIMB 9240 / NCTC 8049).